Here is a 712-residue protein sequence, read N- to C-terminus: Polyribonucleotide nucleotidyltransferase (712 aa).

Mg(2+) is bound by residues D485 and D491. The region spanning 552 to 611 (PKITTISVPKEKIRDVIGQGGKVIREIVEYSGAKIDINDDGTIMIAASSEDQATRAIERI) is the KH domain. Residues 621 to 689 (GAIYTGKVVK…DRGKVKLSMR (69 aa)) enclose the S1 motif domain.

This sequence belongs to the polyribonucleotide nucleotidyltransferase family. It depends on Mg(2+) as a cofactor.

It is found in the cytoplasm. The enzyme catalyses RNA(n+1) + phosphate = RNA(n) + a ribonucleoside 5'-diphosphate. Its function is as follows. Involved in mRNA degradation. Catalyzes the phosphorolysis of single-stranded polyribonucleotides processively in the 3'- to 5'-direction. This is Polyribonucleotide nucleotidyltransferase from Gluconacetobacter diazotrophicus (strain ATCC 49037 / DSM 5601 / CCUG 37298 / CIP 103539 / LMG 7603 / PAl5).